The primary structure comprises 421 residues: MIHDTSARSRTAVFSAWRGRCSRLTRDRWRVALLILLSIAVGAVGWSGEALLLPTAMLFPLLWAQSPSRLVAGAVSAGYFLTASRGLPQGVANFYAADFWHGLLLWLAASAGFVAVHAAFWPARLQKRLPGRGALGWGKPVRYLAAAVLMGLPPFGITGWAHPLTAAGILFPGFGWWGLGATTAGLAMMTSRYWPAAAIALGGFWFWSAATWTQPVLPDGWKGVDLEQGQTLGRDGSLDHHRDLIATVRAAAGAETRVIVLPESALGLWTPTVARLWQAGLRGADVTVIAGAAVIDPGGYDNVMVTVSEGETRILYRERMPIPVSMWQPWLQWTGQGGGAQAHFFANPAVDLAGTRIAPLICYEQLIVWPILHSMLFSPAAIVATGNGWWTEGTSIVAIQQAGVIAWAKLFGRPVVTAFNT.

8 helical membrane passes run 33-53, 103-123, 144-164, 169-189, 193-213, 287-307, 366-386, and 388-408; these read LLIL…ALLL, LLLW…FWPA, LAAA…AHPL, ILFP…LAMM, YWPA…ATWT, TVIA…MVTV, LIVW…VATG, and GWWT…IAWA. A CN hydrolase domain is found at 222–421; that stretch reads KGVDLEQGQT…GRPVVTAFNT (200 aa).

It is found in the cell membrane. Functionally, enhances conjugal transfer of the Ti plasmid. This is Conjugal transfer protein TraB (traB) from Agrobacterium fabrum (strain C58 / ATCC 33970) (Agrobacterium tumefaciens (strain C58)).